The primary structure comprises 1372 residues: MDSKDFTQLNLEEHSYKVNREKLPIDSYIQYGGFTYANFTPYIIHGDDGFGEHKQLNWTNKLLWNKLGKLNIKDTQILMQNNISEEQHNELISLEAQKIARENLADRINYLQNINTSIDFKLWKMNKENLERQELLLRQINELKEEIKSLKNIPSTVAIIPTNTYTINMIRTETEDWKYFKYIEKELVQNKTEAIAKILDNSYIINDNLGLLYERYEEINPTPKPYKRPETIFDTPQYAKYIRNQKRQEEYEKQQELKKENENKEYQEFLEWKEKQQKDKGKGIQTVYPTLIIPDIKPEKQKKEDMMLEMIKNLQNELEQLKIQRHKEHEKQAELTKIQMLEEELEEELDPDNLEKEVLNNIQNIQISSDISESSEINEISDNETEQISGSDSDYNNEQINVKIEGEEYEYKDNYRYYKPQPPYYKKDIRRERQYKGQSSQRADYIKNRREQFESTYQANMNTTINDSGEILNLDCTTPEEAEDRIQKWTQSMSIALVKQQLSNEQAKQFIRRTFIGNVKEWYKNLTNEAKQKLEGNAPLLSLTHMELGLRAEFGKLGIESDVEKHEKKTSIARHKILQLQICSMDHQNLNAYLCEFQEYYYSANYTEAESENILNMFYSKLPEPWGQQVLNGYLSEIKGKNLLDSIGARMTYLQEFISDKCKENWTQKQARKIQLSKNLDCSYYEVGKYGCKQIRPHKRKRYYKKYIPIKRKYFNKKRYKKYYRPKKFLKRKNPHKACKCYNCGEEGHISPNCKKPKKKTRINNLEALEFKNTEMENLEFETNKNDIIWVEEIEVIQPLHYEEEEKYKGNYSDRILQNPYYINSISIEELDNLDWEFEYQEDIEDDLEYQNFVYQESNDNWYSDQENWYSDEQYLGIYMFIGETSGENNQDNMEGIIKEYNKTEPEKINKIIFTSEKFKQIMENDLNMTKDKIFHNNKLKKLFGKKEIEYYIVTDIEHPIDVKYVQNQDKIINLPLYNQEIFENEIQKIPDKDQNKIRNIHLAAVEIVVKAYFREGIDTPFEIILCDDRITYPQEGSLVEVLIGNLIYQKVKFTKIINYSISIEDKNLDKSLVMYWNLEGIKMIKDSKIFSIRLRNLYVLSNKHIVKNKKQYNGNIIIEPIFQDVIQNNNRNYIEYGKPGKFDRTKLKSYSRRFNEPLRLDDRTNIQREKDQIEKADHNLELQKELNNLNYYSQQGQSSNVLDIPKILKIENTKNNYKQFHIIGKITEGRLNKFYPILIDTGAADSYISSKILEDEKLVSNKLSKVVTSYNADNEKHIYDRNTEVIIELIDKNNEKYKINFIGLVDQLRLLEGGKAEILLGMNILQNLKPYCITDDYLEINLGFRCIKINRIKKDIFEIREDLQQMNVLNE.

Coiled-coil stretches lie at residues 126 to 153 (NKENLERQELLLRQINELKEEIKSLKNI) and 299 to 350 (EKQK…EELD). The disordered stretch occupies residues 372–398 (SESSEINEISDNETEQISGSDSDYNNE). The span at 386–398 (EQISGSDSDYNNE) shows a compositional bias: polar residues. A CCHC-type zinc finger spans residues 739–756 (CKCYNCGEEGHISPNCKK). Residues 1162 to 1189 (DDRTNIQREKDQIEKADHNLELQKELNN) adopt a coiled-coil conformation.

It localises to the virion. The sequence is that of Putative Polyprotein CP from Cassava vein mosaic virus (CsVMV).